The following is a 347-amino-acid chain: NADH-ubiquinone oxidoreductase chain 2 (347 aa).

Transmembrane regions (helical) follow at residues 1 to 21, 25 to 45, 59 to 79, 111 to 131, 149 to 169, 178 to 198, 201 to 221, 237 to 257, 274 to 294, and 326 to 346; these read MNPL…AIVA, HWLM…PILM, YFLT…MNLV, FHFW…LILL, INLD…GWGG, IMAY…TYNP, TLLN…MFML, MPLL…LPPL, NSVI…YFYM, and LSPL…LALL.

The protein belongs to the complex I subunit 2 family. In terms of assembly, core subunit of respiratory chain NADH dehydrogenase (Complex I) which is composed of 45 different subunits. Interacts with TMEM242.

It is found in the mitochondrion inner membrane. The catalysed reaction is a ubiquinone + NADH + 5 H(+)(in) = a ubiquinol + NAD(+) + 4 H(+)(out). In terms of biological role, core subunit of the mitochondrial membrane respiratory chain NADH dehydrogenase (Complex I) which catalyzes electron transfer from NADH through the respiratory chain, using ubiquinone as an electron acceptor. Essential for the catalytic activity and assembly of complex I. The chain is NADH-ubiquinone oxidoreductase chain 2 from Pteropus rodricensis (Rodriguez flying fox).